The primary structure comprises 261 residues: Hydroxylase cctR (261 aa).

A helical transmembrane segment spans residues 38–58 (VFVSLLILSNTISFGLLGWIG). Asparagine 95 carries N-linked (GlcNAc...) asparagine glycosylation. 2 short sequence motifs (HXXHC) span residues 146-150 (HEIHC) and 176-180 (HIAHC).

This sequence belongs to the ustYa family.

Its subcellular location is the membrane. The protein operates within mycotoxin biosynthesis. Hydroxylase; part of the gene cluster that mediates the biosynthesis of the mycotoxin cyclochlorotine, a hepatotoxic and carcinogenic cyclic chlorinated pentapeptide. Within the pathway, cctR performs the last step by hydroxylating cyclochlorotine to yield hydroxycyclochlorotine. The NRPS cctN initially catalyzes the condensation of L-serine (Ser), Pro, L-2-aminobutyrate (2Abu), Ser, and beta-Phe in this order to produce isocyclotine. After the dichlorination of Pro2 catalyzed by cctP2 to produce isocyclochlorotine, the cctO-mediated transacylation of isocyclochlorotine can furnish cyclochlorotine. The subsequent hydroxylation of cyclochlorotine by cctR yields hydroxycyclochlorotine as the final product. CctP1 probably acts as a phenylalanine aminomutase and provides the uncommon building block beta-Phe. Furthermore, 2Abu can be synthesized from threonine by one of the threonine dehydratases and transaminases localized outside of the cluster. The functions of the remaining proteins encoded by the cluster, cctM and cctT, have not been identified yet. This chain is Hydroxylase cctR, found in Talaromyces islandicus (Penicillium islandicum).